The following is a 225-amino-acid chain: Imidazoleglycerol-phosphate dehydratase (225 aa).

It belongs to the imidazoleglycerol-phosphate dehydratase family.

The catalysed reaction is D-erythro-1-(imidazol-4-yl)glycerol 3-phosphate = 3-(imidazol-4-yl)-2-oxopropyl phosphate + H2O. Its pathway is amino-acid biosynthesis; L-histidine biosynthesis; L-histidine from 5-phospho-alpha-D-ribose 1-diphosphate: step 6/9. The polypeptide is Imidazoleglycerol-phosphate dehydratase (PTH3) (Pyricularia oryzae (strain 70-15 / ATCC MYA-4617 / FGSC 8958) (Rice blast fungus)).